A 62-amino-acid chain; its full sequence is Probable tautomerase SH1546 (62 aa).

The active-site Proton acceptor; via imino nitrogen is proline 2.

It belongs to the 4-oxalocrotonate tautomerase family.

In Staphylococcus haemolyticus (strain JCSC1435), this protein is Probable tautomerase SH1546.